The following is a 1150-amino-acid chain: DNA polymerase (1150 aa).

Positions 1-53 are disordered; that stretch reads MSLVQGHGTSGLFTEPPNPINQQESSGPSLPAQDAAQAFASSPRAGATSTIVN.

It belongs to the DNA polymerase type-B family. As to quaternary structure, heterodimer with the terminal protein; this heterodimer binds to bp 9 to 18 of the genome. Forms a complex with viral pTP, DBP and hosts NFIA and POU2F1/OCT1 for initiation of replication.

It is found in the host nucleus. It carries out the reaction DNA(n) + a 2'-deoxyribonucleoside 5'-triphosphate = DNA(n+1) + diphosphate. In terms of biological role, eukaryotic-type DNA polymerase involved in viral genomic replication. DNA synthesis is protein primed, and acts in a strand displacement replication. Assembles in complex with viral pTP, DBP, host NFIA and host POU2F1/OCT1 on viral origin of replication. The polymerase covalently transfers dCMP onto pTP, thereby initiating complementary strand synthesis. In Canis lupus familiaris (Dog), this protein is DNA polymerase.